A 974-amino-acid chain; its full sequence is Exocyst complex component 4 (974 aa).

Position 2 is an N-acetylalanine (A2). Residue K9 is modified to N6-acetyllysine. S32 and S226 each carry phosphoserine. Residues 32 to 114 (STSDDVEDRE…HCKRDELRKL (83 aa)) adopt a coiled-coil conformation. Residues T233 and T237 each carry the phosphothreonine modification. S468 carries the post-translational modification Phosphoserine.

This sequence belongs to the SEC8 family. In terms of assembly, the exocyst complex is composed of EXOC1, EXOC2, EXOC3, EXOC4, EXOC5, EXOC6, EXOC7 and EXOC8. Interacts with BIRC6/bruce. Interacts with MYRIP. Interacts with SH3BP1; required for the localization of both SH3BP1 and the exocyst to the leading edge of migrating cells. Interacts with SLC6A9.

It is found in the midbody. It localises to the midbody ring. Its subcellular location is the cell projection. The protein resides in the cytoplasm. The protein localises to the cytoskeleton. It is found in the microtubule organizing center. It localises to the centrosome. Component of the exocyst complex involved in the docking of exocytic vesicles with fusion sites on the plasma membrane. This chain is Exocyst complex component 4 (EXOC4), found in Homo sapiens (Human).